A 154-amino-acid polypeptide reads, in one-letter code: Peptidoglycan amidase Tse1 (154 aa).

C7 and C148 are oxidised to a cystine. C30 acts as the Nucleophile in catalysis. H91 (proton acceptor) is an active-site residue.

In terms of assembly, forms a heterotetramer with Tsi1 consisting of two Tse1 dimers and two Tsi1 dimers. Formation of the complex inactivates Tse1 enzymatic activity.

The protein localises to the host membrane. It is found in the secreted. The catalysed reaction is Hydrolysis of gamma-D-glutamyl bonds to the L-terminus (position 7) of meso-diaminopimelic acid (meso-A2pm) in 7-(L-Ala-gamma-D-Glu)-meso-A2pm and 7-(L-Ala-gamma-D-Glu)-7-(D-Ala)-meso-A2pm. It is required that the D-terminal amino and carboxy groups of meso-A2pm are unsubstituted.. Functionally, toxin secreted by the H1 type VI (H1-T6SS) secretion system into the periplasm of recipient cells. Degrades peptidoglycan via amidase activity thereby helping itself to compete with other bacteria. To protect itself, the bacterium synthesizes immunity protein Tsi1 that specifically interacts with and inactivates cognate toxin. This Pseudomonas aeruginosa (strain ATCC 15692 / DSM 22644 / CIP 104116 / JCM 14847 / LMG 12228 / 1C / PRS 101 / PAO1) protein is Peptidoglycan amidase Tse1.